A 380-amino-acid chain; its full sequence is Lipid-A-disaccharide synthase (380 aa).

Belongs to the LpxB family.

The catalysed reaction is a lipid X + a UDP-2-N,3-O-bis[(3R)-3-hydroxyacyl]-alpha-D-glucosamine = a lipid A disaccharide + UDP + H(+). Its pathway is bacterial outer membrane biogenesis; LPS lipid A biosynthesis. Condensation of UDP-2,3-diacylglucosamine and 2,3-diacylglucosamine-1-phosphate to form lipid A disaccharide, a precursor of lipid A, a phosphorylated glycolipid that anchors the lipopolysaccharide to the outer membrane of the cell. This Pseudomonas savastanoi pv. phaseolicola (strain 1448A / Race 6) (Pseudomonas syringae pv. phaseolicola (strain 1448A / Race 6)) protein is Lipid-A-disaccharide synthase.